The following is a 400-amino-acid chain: Formate-dependent phosphoribosylglycinamide formyltransferase (400 aa).

N(1)-(5-phospho-beta-D-ribosyl)glycinamide is bound by residues 22–23 (EL) and Glu-82. ATP contacts are provided by residues Arg-115, Lys-156, 161 to 166 (SSGKGQ), 196 to 199 (EGFI), and Glu-204. Positions 120–309 (RLAAETLGLP…EFALHARAIL (190 aa)) constitute an ATP-grasp domain. Mg(2+) is bound by residues Glu-268 and Glu-280. Residues Asp-287, Lys-361, and 368 to 369 (RR) each bind N(1)-(5-phospho-beta-D-ribosyl)glycinamide.

It belongs to the PurK/PurT family. In terms of assembly, homodimer.

The enzyme catalyses N(1)-(5-phospho-beta-D-ribosyl)glycinamide + formate + ATP = N(2)-formyl-N(1)-(5-phospho-beta-D-ribosyl)glycinamide + ADP + phosphate + H(+). Its pathway is purine metabolism; IMP biosynthesis via de novo pathway; N(2)-formyl-N(1)-(5-phospho-D-ribosyl)glycinamide from N(1)-(5-phospho-D-ribosyl)glycinamide (formate route): step 1/1. Functionally, involved in the de novo purine biosynthesis. Catalyzes the transfer of formate to 5-phospho-ribosyl-glycinamide (GAR), producing 5-phospho-ribosyl-N-formylglycinamide (FGAR). Formate is provided by PurU via hydrolysis of 10-formyl-tetrahydrofolate. The chain is Formate-dependent phosphoribosylglycinamide formyltransferase from Xanthomonas campestris pv. campestris (strain 8004).